Here is a 340-residue protein sequence, read N- to C-terminus: Zinc finger protein 367 (340 aa).

Positions 96-140 are disordered; it reads LPTLRGAPPSSASVAAVSGGEDEEEASSPDSGHLKDGIRRGRPRA. The span at 101–114 shows a compositional bias: low complexity; it reads GAPPSSASVAAVSG. A compositionally biased stretch (basic and acidic residues) spans 127–140; the sequence is GHLKDGIRRGRPRA. C2H2-type zinc fingers lie at residues 157 to 179 and 185 to 209; these read IRCNICNRVFPREKSLQAHKRTH and YLCDYPDCGKAFVQSGQLKTHQRLH. The segment at 280 to 317 is disordered; the sequence is KGKLVQKADQEQQDPLEYLQSDEEDDEKSGAQRRLQEQ. The stretch at 299–332 forms a coiled coil; the sequence is QSDEEDDEKSGAQRRLQEQRERLHGALALIELAN. A Phosphoserine modification is found at Ser300. Positions 307 to 317 are enriched in basic and acidic residues; the sequence is KSGAQRRLQEQ.

It belongs to the krueppel C2H2-type zinc-finger protein family.

The protein resides in the nucleus. Functionally, transcriptional activator. May be involved in transcriptional activation of erythroid genes. This is Zinc finger protein 367 (Znf367) from Rattus norvegicus (Rat).